A 746-amino-acid polypeptide reads, in one-letter code: Rhizobactin receptor (746 aa).

An N-terminal signal peptide occupies residues M1–A26. The short motif at E40–G47 is the TonB box element. Residues Q52–K163 enclose the TBDR plug domain. One can recognise a TBDR beta-barrel domain in the interval E169–F746. The short motif at F729–F746 is the TonB C-terminal box element.

It belongs to the TonB-dependent receptor family.

It is found in the cell outer membrane. Its function is as follows. Receptor for the siderophore rhizobactin. The protein is Rhizobactin receptor (rhtA) of Rhizobium meliloti (strain 1021) (Ensifer meliloti).